Here is a 645-residue protein sequence, read N- to C-terminus: Threonine--tRNA ligase (645 aa).

The TGS domain occupies 1-63 (MEQINIQFPD…ETDGSIEIVT (63 aa)). The interval 242–540 (DHRKIGKELE…LTEETKGAFP (299 aa)) is catalytic. Zn(2+) contacts are provided by cysteine 336, histidine 387, and histidine 517.

The protein belongs to the class-II aminoacyl-tRNA synthetase family. Homodimer. The cofactor is Zn(2+).

It localises to the cytoplasm. It carries out the reaction tRNA(Thr) + L-threonine + ATP = L-threonyl-tRNA(Thr) + AMP + diphosphate + H(+). Its function is as follows. Catalyzes the attachment of threonine to tRNA(Thr) in a two-step reaction: L-threonine is first activated by ATP to form Thr-AMP and then transferred to the acceptor end of tRNA(Thr). Also edits incorrectly charged L-seryl-tRNA(Thr). The chain is Threonine--tRNA ligase from Staphylococcus aureus (strain bovine RF122 / ET3-1).